A 292-amino-acid polypeptide reads, in one-letter code: 4-hydroxy-tetrahydrodipicolinate synthase (292 aa).

Thr-45 contacts pyruvate. Tyr-133 serves as the catalytic Proton donor/acceptor. Lys-161 (schiff-base intermediate with substrate) is an active-site residue. Ile-203 provides a ligand contact to pyruvate.

This sequence belongs to the DapA family. Homotetramer; dimer of dimers.

It localises to the cytoplasm. It carries out the reaction L-aspartate 4-semialdehyde + pyruvate = (2S,4S)-4-hydroxy-2,3,4,5-tetrahydrodipicolinate + H2O + H(+). It functions in the pathway amino-acid biosynthesis; L-lysine biosynthesis via DAP pathway; (S)-tetrahydrodipicolinate from L-aspartate: step 3/4. Catalyzes the condensation of (S)-aspartate-beta-semialdehyde [(S)-ASA] and pyruvate to 4-hydroxy-tetrahydrodipicolinate (HTPA). The chain is 4-hydroxy-tetrahydrodipicolinate synthase from Aromatoleum aromaticum (strain DSM 19018 / LMG 30748 / EbN1) (Azoarcus sp. (strain EbN1)).